We begin with the raw amino-acid sequence, 104 residues long: Pole-localizer protein TmaR (104 aa).

Coiled coils occupy residues 7–34 and 76–96; these read IVNQARRKNKLKRELLDNEKKVRDNRKR and SAEISKARRDISRRIRELTEE.

This sequence belongs to the pole-localizer TmaR family.

It is found in the cytoplasm. In terms of biological role, pole-localizer protein involved in the regulation of several cellular processes. The chain is Pole-localizer protein TmaR from Vibrio campbellii (strain ATCC BAA-1116).